The primary structure comprises 149 residues: NADH-quinone oxidoreductase subunit I 1 (149 aa).

4Fe-4S ferredoxin-type domains follow at residues 51–82 (LKSFADTGTHKCIACGTCERMCPSNVIKVQGT) and 93–122 (THYVIDFTRCSLCGICVESCPTGTLQYSTE). Positions 62, 65, 68, 72, 102, 105, 108, and 112 each coordinate [4Fe-4S] cluster.

Belongs to the complex I 23 kDa subunit family. In terms of assembly, NDH-1 is composed of 14 different subunits. Subunits NuoA, H, J, K, L, M, N constitute the membrane sector of the complex. [4Fe-4S] cluster is required as a cofactor.

The protein localises to the cell inner membrane. The enzyme catalyses a quinone + NADH + 5 H(+)(in) = a quinol + NAD(+) + 4 H(+)(out). In terms of biological role, NDH-1 shuttles electrons from NADH, via FMN and iron-sulfur (Fe-S) centers, to quinones in the respiratory chain. The immediate electron acceptor for the enzyme in this species is believed to be ubiquinone. Couples the redox reaction to proton translocation (for every two electrons transferred, four hydrogen ions are translocated across the cytoplasmic membrane), and thus conserves the redox energy in a proton gradient. This chain is NADH-quinone oxidoreductase subunit I 1, found in Syntrophobacter fumaroxidans (strain DSM 10017 / MPOB).